The primary structure comprises 408 residues: MSAQNLAPPLNTLDFDKKPEETRVVVAMSGGVDSSVVAGLLKQQGYDVLGITLQLYDHGAAVHRAGSCCAGQDIDDARHVCETLGIPHYVLDYEKRFRETVINPFAESYVAGETPIPCVSCNQTVKFADLLATAKELGADALATGHYIRSRPNPSSEHPGRRALFRPADADRDQSYFLFATTQEQIDYLRFPLGGLPKAETRRLAEEMGLVVAKKADSQDICFVPQGKYSDIITKLKPNAALAGEIVHLDGRVLGSHEGILHFTIGQRRGIGIATGEPLYVVYLDARSRRVIVGPKEALETHRVYLRDVNWLGDETLAEAASGEGFACYAKVRSTRAPAPAVLHVDATGTYVDLTIGEAGIAPGQACALYSAPGDDARVFGGGFIERSEREPSAEASLKALLASPVAA.

ATP-binding positions include 27 to 34 (AMSGGVDS) and leucine 53. Cysteine 121 acts as the Nucleophile in catalysis. Cysteine 121 and cysteine 222 are joined by a disulfide. Glycine 145 is an ATP binding site. An interaction with tRNA region spans residues 172-174 (RDQ). The active-site Cysteine persulfide intermediate is cysteine 222.

The protein belongs to the MnmA/TRMU family.

It is found in the cytoplasm. The catalysed reaction is S-sulfanyl-L-cysteinyl-[protein] + uridine(34) in tRNA + AH2 + ATP = 2-thiouridine(34) in tRNA + L-cysteinyl-[protein] + A + AMP + diphosphate + H(+). In terms of biological role, catalyzes the 2-thiolation of uridine at the wobble position (U34) of tRNA, leading to the formation of s(2)U34. This Rhizobium etli (strain ATCC 51251 / DSM 11541 / JCM 21823 / NBRC 15573 / CFN 42) protein is tRNA-specific 2-thiouridylase MnmA.